The following is a 40-amino-acid chain: Photosystem II reaction center protein J (40 aa).

A helical membrane pass occupies residues 8 to 28 (IPLWIVGTVTGILVIGLIGVF).

This sequence belongs to the PsbJ family. In terms of assembly, PSII is composed of 1 copy each of membrane proteins PsbA, PsbB, PsbC, PsbD, PsbE, PsbF, PsbH, PsbI, PsbJ, PsbK, PsbL, PsbM, PsbT, PsbX, PsbY, PsbZ, Psb30/Ycf12, at least 3 peripheral proteins of the oxygen-evolving complex and a large number of cofactors. It forms dimeric complexes.

It is found in the plastid. It localises to the chloroplast thylakoid membrane. Its function is as follows. One of the components of the core complex of photosystem II (PSII). PSII is a light-driven water:plastoquinone oxidoreductase that uses light energy to abstract electrons from H(2)O, generating O(2) and a proton gradient subsequently used for ATP formation. It consists of a core antenna complex that captures photons, and an electron transfer chain that converts photonic excitation into a charge separation. The polypeptide is Photosystem II reaction center protein J (Coffea arabica (Arabian coffee)).